The primary structure comprises 2190 residues: Non-reducing polyketide synthase mapC' (2190 aa).

Residues 14–268 (VLFGPQCPDI…HHEAHREGIQ (255 aa)) form an N-terminal acylcarrier protein transacylase domain (SAT) region. A Ketosynthase family 3 (KS3) domain is found at 401-817 (ASPIAITGMA…GSNAALIVKE (417 aa)). Active-site for beta-ketoacyl synthase activity residues include cysteine 566, histidine 701, and histidine 740. The tract at residues 893 to 1190 (CFGGQNGLTA…NVTSALWAQG (298 aa)) is malonyl-CoA:ACP transacylase (MAT) domain. Serine 979 functions as the For acyl/malonyl transferase activity in the catalytic mechanism. The segment at 1243–1375 (GQEAGLLCQL…GTVCLHQERS (133 aa)) is N-terminal hotdog fold. A PKS/mFAS DH domain is found at 1243–1552 (GQEAGLLCQL…FTSVSIRSLT (310 aa)). Residues 1251-1556 (QLSESPDERL…SIRSLTRALA (306 aa)) are product template (PT) domain. Histidine 1277 serves as the catalytic Proton acceptor; for dehydratase activity. The C-terminal hotdog fold stretch occupies residues 1401–1552 (ASNGLKGSTV…FTSVSIRSLT (152 aa)). The active-site Proton donor; for dehydratase activity is the aspartate 1458. The 75-residue stretch at 1597-1671 (ANDLATVQEM…GLVEHIFPGH (75 aa)) folds into the Carrier domain. Serine 1631 bears the O-(pantetheine 4'-phosphoryl)serine mark. The methyltransferase (CMeT) domain stretch occupies residues 1840-2187 (ATMSPSKPIK…AEGYEFLRTH (348 aa)). Active-site for thioesterase activity residues include serine 1969, aspartate 2127, and histidine 2159.

Its subcellular location is the cytoplasm. The protein resides in the cytosol. The enzyme catalyses 3 malonyl-CoA + acetyl-CoA + S-adenosyl-L-methionine + H(+) = 5-methylorsellinate + S-adenosyl-L-homocysteine + 3 CO2 + 4 CoA. It functions in the pathway secondary metabolite biosynthesis; terpenoid biosynthesis. Non-reducing polyketide synthase; part of the gene cluster that mediates the biosynthesis of mycophenolic acid (MPA), the first isolated antibiotic natural product in the world obtained from a culture of Penicillium brevicompactum in 1893. MpaC' catalyzes the synthesis of 5-methylorsellinic acid (5MOA) via the condensation of 1 acetyl-CoA starter unit with 3 malonyl-CoA units and one methylation step. The first step of the pathway is the synthesis of 5-methylorsellinic acid (5MOA) by the cytosolic polyketide synthase mpaC. 5MOA is then converted to the phthalide compound 5,7-dihydroxy-4,6-dimethylphthalide (DHMP) by the endoplasmic reticulum-bound cytochrome P450 monooxygenase mpaDE. MpaDE first catalyzes hydroxylation of 5-MOA to 4,6-dihydroxy-2-(hydroxymethyl)-3-methylbenzoic acid (DHMB). MpaDE then acts as a lactone synthase that catalyzes the ring closure to convert DHMB into DHMP. The next step is the prenylation of DHMP by the Golgi apparatus-associated prenyltransferase mpaA to yield farnesyl-DHMP (FDHMP). The ER-bound oxygenase mpaB then mediates the oxidative cleavage the C19-C20 double bond in FDHMP to yield FDHMP-3C via a mycophenolic aldehyde intermediate. The O-methyltransferase mpaG catalyzes the methylation of FDHMP-3C to yield MFDHMP-3C. After the cytosolic methylation of FDHMP-3C, MFDHMP-3C enters into peroxisomes probably via free diffusion due to its low molecular weight. Upon a peroxisomal CoA ligation reaction, catalyzed by a beta-oxidation component enzyme acyl-CoA ligase ACL891, MFDHMP-3C-CoA would then be restricted to peroxisomes for the following beta-oxidation pathway steps. The peroxisomal beta-oxidation machinery than converts MFDHMP-3C-CoA into MPA_CoA, via a beta-oxidation chain-shortening process. Finally mpaH acts as a peroxisomal acyl-CoA hydrolase with high substrate specificity toward MPA-CoA to release the final product MPA. The polypeptide is Non-reducing polyketide synthase mapC' (Penicillium brevicompactum).